Consider the following 298-residue polypeptide: Lipoyl synthase (298 aa).

Residues Cys40, Cys45, Cys51, Cys67, Cys71, Cys74, and Ser280 each coordinate [4Fe-4S] cluster. Residues 53–269 (AVRKTATFMI…KEIALSKGFS (217 aa)) form the Radical SAM core domain.

Belongs to the radical SAM superfamily. Lipoyl synthase family. The cofactor is [4Fe-4S] cluster.

The protein resides in the cytoplasm. It catalyses the reaction [[Fe-S] cluster scaffold protein carrying a second [4Fe-4S](2+) cluster] + N(6)-octanoyl-L-lysyl-[protein] + 2 oxidized [2Fe-2S]-[ferredoxin] + 2 S-adenosyl-L-methionine + 4 H(+) = [[Fe-S] cluster scaffold protein] + N(6)-[(R)-dihydrolipoyl]-L-lysyl-[protein] + 4 Fe(3+) + 2 hydrogen sulfide + 2 5'-deoxyadenosine + 2 L-methionine + 2 reduced [2Fe-2S]-[ferredoxin]. The protein operates within protein modification; protein lipoylation via endogenous pathway; protein N(6)-(lipoyl)lysine from octanoyl-[acyl-carrier-protein]. Its function is as follows. Catalyzes the radical-mediated insertion of two sulfur atoms into the C-6 and C-8 positions of the octanoyl moiety bound to the lipoyl domains of lipoate-dependent enzymes, thereby converting the octanoylated domains into lipoylated derivatives. This Bacillus anthracis (strain A0248) protein is Lipoyl synthase.